We begin with the raw amino-acid sequence, 85 residues long: Large ribosomal subunit protein bL27 (85 aa).

The interval 1 to 22 is disordered; it reads MAHKKAGGSTKNGRDSESKRLG.

This sequence belongs to the bacterial ribosomal protein bL27 family.

The polypeptide is Large ribosomal subunit protein bL27 (Alteromonas mediterranea (strain DSM 17117 / CIP 110805 / LMG 28347 / Deep ecotype)).